A 120-amino-acid polypeptide reads, in one-letter code: Small ribosomal subunit protein eS24 (120 aa).

Residues 101–120 (RDAGTKQKKGGSKGGQGAKG) are disordered.

It belongs to the eukaryotic ribosomal protein eS24 family.

This Saccharolobus islandicus (strain M.16.4 / Kamchatka #3) (Sulfolobus islandicus) protein is Small ribosomal subunit protein eS24.